Consider the following 346-residue polypeptide: Aspartate-semialdehyde dehydrogenase (346 aa).

NADP(+)-binding positions include 10-13 and 38-39; these read TGQG and RS. Arg98 is a phosphate binding site. The Acyl-thioester intermediate role is filled by Cys131. Gln158 is a substrate binding site. 161–162 contacts NADP(+); sequence SG. A phosphate-binding site is contributed by Lys228. Arg250 contributes to the substrate binding site. Catalysis depends on His257, which acts as the Proton acceptor. Asn326 lines the NADP(+) pocket.

This sequence belongs to the aspartate-semialdehyde dehydrogenase family. In terms of assembly, homodimer.

It catalyses the reaction L-aspartate 4-semialdehyde + phosphate + NADP(+) = 4-phospho-L-aspartate + NADPH + H(+). It functions in the pathway amino-acid biosynthesis; L-lysine biosynthesis via DAP pathway; (S)-tetrahydrodipicolinate from L-aspartate: step 2/4. The protein operates within amino-acid biosynthesis; L-methionine biosynthesis via de novo pathway; L-homoserine from L-aspartate: step 2/3. It participates in amino-acid biosynthesis; L-threonine biosynthesis; L-threonine from L-aspartate: step 2/5. Catalyzes the NADPH-dependent formation of L-aspartate-semialdehyde (L-ASA) by the reductive dephosphorylation of L-aspartyl-4-phosphate. The sequence is that of Aspartate-semialdehyde dehydrogenase from Mycolicibacterium smegmatis (Mycobacterium smegmatis).